The sequence spans 1187 residues: DNA excision repair protein CSB (1187 aa).

The segment covering Q31–T43 has biased composition (polar residues). 4 disordered regions span residues Q31 to A53, I75 to A102, K217 to S242, and D265 to D351. 2 stretches are compositionally biased toward basic and acidic residues: residues K92–G101 and K217–D230. Residues K300–N319 show a composition bias toward basic residues. Over residues S339–D351 the composition is skewed to acidic residues. One can recognise a Helicase ATP-binding domain in the interval W384–G580. D397–T404 is an ATP binding site. Residues S457 to E480 form a disordered region. The segment covering S468–E480 has biased composition (acidic residues). Positions D531–H534 match the DEGH box motif. Positions K716–K876 constitute a Helicase C-terminal domain. Disordered stretches follow at residues L916–D945 and G1095–R1116. The span at A918–S933 shows a compositional bias: low complexity.

Belongs to the SNF2/RAD54 helicase family. As to quaternary structure, homodimer. Binds DNA. As to expression, expressed in proliferating tissues. Highly expressed in shoot apical meristem (SAM). Expressed in roots, young leaves, flag leaves, and panicles. Expressed at very low levels in mature leaves.

Its subcellular location is the nucleus. Its function is as follows. Essential factor involved in transcription-coupled nucleotide excision repair (TCR) which allows RNA polymerase II-blocking lesions to be rapidly removed from the transcribed strand of active genes. Upon DNA-binding, it locally modifies DNA conformation by wrapping the DNA around itself, thereby modifying the interface between stalled RNA polymerase II and DNA. It is required for transcription-coupled repair complex formation. In Oryza sativa subsp. japonica (Rice), this protein is DNA excision repair protein CSB.